Reading from the N-terminus, the 142-residue chain is uncharacterized protein (142 aa).

N-linked (GlcNAc...) asparagine; by host glycans are attached at residues N29 and N67. The helical transmembrane segment at 88–108 threads the bilayer; that stretch reads VFYLGYPVIFIIGVTYFSIIA.

The protein localises to the membrane. This is an uncharacterized protein from Acanthamoeba polyphaga mimivirus (APMV).